Reading from the N-terminus, the 119-residue chain is NADH-quinone oxidoreductase subunit A (119 aa).

3 consecutive transmembrane segments (helical) span residues 7 to 27 (YPVL…VSIG), 63 to 83 (LVAI…PWGV), and 88 to 108 (IGWP…LGFA).

This sequence belongs to the complex I subunit 3 family. In terms of assembly, NDH-1 is composed of 14 different subunits. Subunits NuoA, H, J, K, L, M, N constitute the membrane sector of the complex.

The protein localises to the cell inner membrane. The enzyme catalyses a quinone + NADH + 5 H(+)(in) = a quinol + NAD(+) + 4 H(+)(out). Functionally, NDH-1 shuttles electrons from NADH, via FMN and iron-sulfur (Fe-S) centers, to quinones in the respiratory chain. The immediate electron acceptor for the enzyme in this species is believed to be ubiquinone. Couples the redox reaction to proton translocation (for every two electrons transferred, four hydrogen ions are translocated across the cytoplasmic membrane), and thus conserves the redox energy in a proton gradient. This chain is NADH-quinone oxidoreductase subunit A, found in Burkholderia ambifaria (strain MC40-6).